The chain runs to 42 residues: Photosystem II reaction center protein J (42 aa).

The chain crosses the membrane as a helical span at residues Ile10–Phe30.

It belongs to the PsbJ family. PSII is composed of 1 copy each of membrane proteins PsbA, PsbB, PsbC, PsbD, PsbE, PsbF, PsbH, PsbI, PsbJ, PsbK, PsbL, PsbM, PsbT, PsbY, PsbZ, Psb30/Ycf12, at least 3 peripheral proteins of the oxygen-evolving complex and a large number of cofactors. It forms dimeric complexes.

Its subcellular location is the plastid. The protein localises to the chloroplast thylakoid membrane. In terms of biological role, this protein is a component of the reaction center of photosystem II. One of the components of the core complex of photosystem II (PSII). PSII is a light-driven water:plastoquinone oxidoreductase that uses light energy to abstract electrons from H(2)O, generating O(2) and a proton gradient subsequently used for ATP formation. It consists of a core antenna complex that captures photons, and an electron transfer chain that converts photonic excitation into a charge separation. This Euglena gracilis protein is Photosystem II reaction center protein J.